The chain runs to 224 residues: Uridylate kinase (224 aa).

8-12 (KITGK) lines the ATP pocket. UMP is bound at residue glycine 43. Glycine 44 and arginine 48 together coordinate ATP. Residues aspartate 66 and 114–120 (LIPGQST) contribute to the UMP site. Residues serine 140, tyrosine 146, and aspartate 149 each coordinate ATP.

Belongs to the UMP kinase family. In terms of assembly, homohexamer.

It is found in the cytoplasm. It carries out the reaction UMP + ATP = UDP + ADP. It participates in pyrimidine metabolism; CTP biosynthesis via de novo pathway; UDP from UMP (UMPK route): step 1/1. With respect to regulation, inhibited by UTP. Its function is as follows. Catalyzes the reversible phosphorylation of UMP to UDP. The sequence is that of Uridylate kinase from Staphylothermus marinus (strain ATCC 43588 / DSM 3639 / JCM 9404 / F1).